The sequence spans 235 residues: Phosphatidylserine decarboxylase proenzyme (235 aa).

Ser-204 functions as the Schiff-base intermediate with substrate; via pyruvic acid in the catalytic mechanism. The residue at position 204 (Ser-204) is a Pyruvic acid (Ser); by autocatalysis.

Belongs to the phosphatidylserine decarboxylase family. PSD-A subfamily. Heterodimer of a large membrane-associated beta subunit and a small pyruvoyl-containing alpha subunit. Requires pyruvate as cofactor. Post-translationally, is synthesized initially as an inactive proenzyme. Formation of the active enzyme involves a self-maturation process in which the active site pyruvoyl group is generated from an internal serine residue via an autocatalytic post-translational modification. Two non-identical subunits are generated from the proenzyme in this reaction, and the pyruvate is formed at the N-terminus of the alpha chain, which is derived from the carboxyl end of the proenzyme. The post-translation cleavage follows an unusual pathway, termed non-hydrolytic serinolysis, in which the side chain hydroxyl group of the serine supplies its oxygen atom to form the C-terminus of the beta chain, while the remainder of the serine residue undergoes an oxidative deamination to produce ammonia and the pyruvoyl prosthetic group on the alpha chain.

Its subcellular location is the cell membrane. It catalyses the reaction a 1,2-diacyl-sn-glycero-3-phospho-L-serine + H(+) = a 1,2-diacyl-sn-glycero-3-phosphoethanolamine + CO2. The protein operates within phospholipid metabolism; phosphatidylethanolamine biosynthesis; phosphatidylethanolamine from CDP-diacylglycerol: step 2/2. Catalyzes the formation of phosphatidylethanolamine (PtdEtn) from phosphatidylserine (PtdSer). The sequence is that of Phosphatidylserine decarboxylase proenzyme from Mycobacterium sp. (strain JLS).